We begin with the raw amino-acid sequence, 513 residues long: GMP synthase [glutamine-hydrolyzing] (513 aa).

The Glutamine amidotransferase type-1 domain occupies 9–198; the sequence is LILVLDFGSQ…VRRVCDCRGQ (190 aa). Cys-86 acts as the Nucleophile in catalysis. Residues His-172 and Glu-174 contribute to the active site. One can recognise a GMPS ATP-PPase domain in the interval 199 to 388; the sequence is WTMENFIEIE…LGIPEHLVWR (190 aa). Residue 226-232 coordinates ATP; sequence SGGVDSS.

In terms of assembly, homodimer.

It carries out the reaction XMP + L-glutamine + ATP + H2O = GMP + L-glutamate + AMP + diphosphate + 2 H(+). Its pathway is purine metabolism; GMP biosynthesis; GMP from XMP (L-Gln route): step 1/1. Its function is as follows. Catalyzes the synthesis of GMP from XMP. The protein is GMP synthase [glutamine-hydrolyzing] of Staphylococcus aureus (strain USA300).